The sequence spans 282 residues: MSPVAIIACVCLAVTLTSISPSEAIVPTRELENVFLGRCKDYEITRYLDILPRVRSDCSALWKDFFKAFSFKNPCDLDLGSYKDFFTSAQQQLPKNKVMFWSGVYDEAHDYANTGRKYITLEDTLPGYMLNSLVWCGQRANPGFNEKVCPDFKTCPVQARESFWGMASSSYAHSAEGEVTYMVDGSNPKVPAYRPDSFFGKYELPNLTNKVTRVKVIVLHRLGEKIIEKCGAGSLLDLEKLVKAKHFAFDCVENPRAVLFLLCSDNPNARECRLAKRFYRIA.

Residues 1-24 form the signal peptide; it reads MSPVAIIACVCLAVTLTSISPSEA. 5 disulfides stabilise this stretch: Cys-39/Cys-58, Cys-75/Cys-155, Cys-136/Cys-149, Cys-230/Cys-251, and Cys-263/Cys-272.

The protein belongs to the ADP-ribosyl cyclase family. Post-translationally, has different isoforms which may be the result of different amounts of phosphorylation. As to expression, immature occoyctes. Oocytes.

The protein resides in the cytoplasmic vesicle. The catalysed reaction is NAD(+) = cyclic ADP-beta-D-ribose + nicotinamide + H(+). The enzyme catalyses nicotinate + NADP(+) = nicotinate-adenine dinucleotide phosphate + nicotinamide. It catalyses the reaction 2'-phospho-cyclic ADP-ribose + nicotinate = nicotinate-adenine dinucleotide phosphate. Its activity is regulated as follows. Activity is presumably regulated by its sequestration in vesicles before egg fertilization. After fertilization and upon NADase release, it could then be regulated via its potential phosphorylation sites. Functionally, synthesizes cyclic ADP-ribose (cADPR), a second messenger for calcium mobilization from endoplasmic reticulum; ADP-ribose is a minor product. Synthesizes the Ca(2+) mobilizer nicotinate-adenine dinucleotide phosphate from 2'-phospho-cADPR and nicotinic acid as well as from NADP(+) and nicotinic acid; with NADP(+) as substrate preferentially catalyzes NADP(+) hydrolysis rather than NAADP(+) synthesis, about 70-fold better at pH 7.4. Has cADPR hydrolase activity at very high enzyme concentrations, which is probably not physiological. The conversion of NAD(+) into ADP-ribose is also only observed at high enzyme concentrations and results from the hydrolysis of cADP-ribose. In Aplysia californica (California sea hare), this protein is ADP-ribosyl cyclase/cyclic ADP-ribose hydrolase.